The following is a 977-amino-acid chain: GAS2-like protein pickled eggs (977 aa).

In terms of domain architecture, Calponin-homology (CH) spans 20–159; sequence EAMREDLAEW…CLLEVARRGA (140 aa). Positions 218 to 245 are disordered; sequence VETDLYDDSDDSETEDDGDQNPVLMYGP. The span at 221-236 shows a compositional bias: acidic residues; sequence DLYDDSDDSETEDDGD. The 73-residue stretch at 252 to 324 folds into the GAR domain; that stretch reads NDLKSLDEMV…HYLDKHDPCR (73 aa). 5 disordered regions span residues 397-543, 557-624, 666-685, 693-803, and 910-977; these read PTLQ…SEIS, AQKR…VCDG, VANT…RSPL, IDNS…KGRS, and NLER…TELY. 2 stretches are compositionally biased toward polar residues: residues 399–428 and 436–454; these read LQNG…NQQA and ATGS…QLLG. Over residues 502 to 527 the composition is skewed to gly residues; it reads GGSGVGSAAGGVSSGSAGSGVAGEQG. The segment covering 577-589 has biased composition (polar residues); sequence RLDQTSSDSQISP. Residues 601 to 620 show a composition bias toward acidic residues; that stretch reads ILEEEDLNGQDREEDQEDYS. Polar residues-rich tracts occupy residues 666–677 and 731–741; these read VANTMGNPTPNL and TRNSTGATTTP. Positions 928–953 are enriched in low complexity; that stretch reads SSAASSCESNNSNAGAGSGAAAGSAS.

The protein belongs to the GAS2 family. Expressed in the ovary and the ring canals of the germline cells. In larvae, expressed in the notal region of the wing disk.

Its subcellular location is the cytoplasm. The protein localises to the cytoskeleton. It is found in the cell cortex. Essential for development and viability. Required for ovary development and oogenesis, and is essential for the development of the indirect flight muscles. May act as a negative regulator of the Notch signaling pathway in certain tissues, such as the muscle precursors and ovaries. May function as a linker protein between the actin and microtubule cytoskeletons. This is GAS2-like protein pickled eggs from Drosophila melanogaster (Fruit fly).